A 182-amino-acid chain; its full sequence is ATP synthase subunit delta (182 aa).

This sequence belongs to the ATPase delta chain family. F-type ATPases have 2 components, F(1) - the catalytic core - and F(0) - the membrane proton channel. F(1) has five subunits: alpha(3), beta(3), gamma(1), delta(1), epsilon(1). F(0) has three main subunits: a(1), b(2) and c(10-14). The alpha and beta chains form an alternating ring which encloses part of the gamma chain. F(1) is attached to F(0) by a central stalk formed by the gamma and epsilon chains, while a peripheral stalk is formed by the delta and b chains.

The protein localises to the cell inner membrane. In terms of biological role, f(1)F(0) ATP synthase produces ATP from ADP in the presence of a proton or sodium gradient. F-type ATPases consist of two structural domains, F(1) containing the extramembraneous catalytic core and F(0) containing the membrane proton channel, linked together by a central stalk and a peripheral stalk. During catalysis, ATP synthesis in the catalytic domain of F(1) is coupled via a rotary mechanism of the central stalk subunits to proton translocation. Functionally, this protein is part of the stalk that links CF(0) to CF(1). It either transmits conformational changes from CF(0) to CF(1) or is implicated in proton conduction. In Histophilus somni (strain 129Pt) (Haemophilus somnus), this protein is ATP synthase subunit delta.